We begin with the raw amino-acid sequence, 366 residues long: tRNA/tmRNA (uracil-C(5))-methyltransferase (366 aa).

Positions 189, 217, 222, 238, and 298 each coordinate S-adenosyl-L-methionine. C323 functions as the Nucleophile in the catalytic mechanism. E357 acts as the Proton acceptor in catalysis.

Belongs to the class I-like SAM-binding methyltransferase superfamily. RNA M5U methyltransferase family. TrmA subfamily.

It catalyses the reaction uridine(54) in tRNA + S-adenosyl-L-methionine = 5-methyluridine(54) in tRNA + S-adenosyl-L-homocysteine + H(+). The enzyme catalyses uridine(341) in tmRNA + S-adenosyl-L-methionine = 5-methyluridine(341) in tmRNA + S-adenosyl-L-homocysteine + H(+). Functionally, dual-specificity methyltransferase that catalyzes the formation of 5-methyluridine at position 54 (m5U54) in all tRNAs, and that of position 341 (m5U341) in tmRNA (transfer-mRNA). The chain is tRNA/tmRNA (uracil-C(5))-methyltransferase from Shewanella oneidensis (strain ATCC 700550 / JCM 31522 / CIP 106686 / LMG 19005 / NCIMB 14063 / MR-1).